The sequence spans 465 residues: Opioid growth factor receptor-like protein 1 (465 aa).

Disordered stretches follow at residues 1 to 89 (MGNL…GNAK) and 309 to 465 (ENFI…TSSG). Basic and acidic residues-rich tracts occupy residues 48–59 (REQPEQPPERAG), 316–325 (PKKEQPERSK), 363–396 (TVEE…RNSE), and 426–440 (SEKD…KDSE). The span at 442–465 (PENTSCHAEVVSQQNVTNPQTSSG) shows a compositional bias: polar residues.

This sequence belongs to the opioid growth factor receptor family.

The sequence is that of Opioid growth factor receptor-like protein 1 (Ogfrl1) from Rattus norvegicus (Rat).